The primary structure comprises 998 residues: MKDSGDSKDQQLMVALRVRPISVAELEEGATLIAHKVDEQMVVLMDPMEDPDDILRAHRSREKSYLFDVAFDFTATQEMVYQATTKSLIEGVISGYNATVFAYGPTGCGKTYTMLGTDQEPGIYVQTLNDLFRAIEETSNDMEYEVSMSYLEIYNEMIRDLLNPSLGYLELREDSKGVIQVAGITEVSTINAKEIMQLLMKGNRQRTQEPTAANQTSSRSHAVLQVTVRQRSRVKNILQEVRQGRLFMIDLAGSERASQTQNRGQRMKEGAHINRSLLALGNCINALSDKGSNKYINYRDSKLTRLLKDSLGGNSRTVMIAHISPASSAFEESRNTLTYAGRAKNIKTRVKQNLLNVSYHIAQYTSIIADLRGEIQRLKRKIDEQTGRGQARGRQDRGDIRHIQAEVQLHSGQGEKAGMGQLREQLASAFQEQMDVRRRLLELENRAMEVQIDTSRHLLTIAGWKHEKSRRALKWREEQRKECYAKDDSEKDSDTGDDQPDILEPPEVAAARESIAALVDEQKQLRKQKLALEQRCRELRARGRRLEETLPRRIGSEEQREVLSLLCRVHELEVENTEMQSHALLRDGALRHRHEAVRRLEQHRSLCDEIIQGQRQIIDDYNLAVPQRLEELYEVYLRELEEGSLEQATIMDQVASRALQDSSLPKITPAGTSLTPDSDLESVKTLSSDAQHLQNSALPPLSTESEGHHVFKAGTGAWQAKSSSVPTPPPIQLGSLVTQEAPAQDSLGSWINSSPDSSENLSEIPLSHKERKEILTGTKCIWVKAARRRSRALGTEGRHLLAPATERSSLSLHSLSEGDDARPPGPLACKRPPSPTLQHAASEDNLSSSTGEAPSRAVGHHGDGPRPWLRGQKKSLGKKREESLEAKRRKRRSRSFEVTGQGLSHPKTHLLGPHQAERISDHRMPVCRHPAPGIRHLGKVTLPLAKVKLPPSQNTGPGDSSPLAVPPNPGGGSRRATRGPRLPHGTSTHGKDGCSRHN.

The region spanning 11-346 is the Kinesin motor domain; that stretch reads QLMVALRVRP…LTYAGRAKNI (336 aa). 104–111 serves as a coordination point for ATP; that stretch reads GPTGCGKT. Coiled-coil stretches lie at residues 360–391 and 424–452; these read HIAQYTSIIADLRGEIQRLKRKIDEQTGRGQA and EQLASAFQEQMDVRRRLLELENRAMEVQI. Over residues 482–494 the composition is skewed to basic and acidic residues; the sequence is ECYAKDDSEKDSD. The interval 482 to 503 is disordered; that stretch reads ECYAKDDSEKDSDTGDDQPDIL. Residues 507-552 adopt a coiled-coil conformation; it reads EVAAARESIAALVDEQKQLRKQKLALEQRCRELRARGRRLEETLPR. 4 stretches are compositionally biased toward polar residues: residues 662–676, 684–697, 746–761, and 836–852; these read SSLPKITPAGTSLTP, KTLSSDAQHLQNSA, SLGSWINSSPDSSENL, and TLQHAASEDNLSSSTGE. Disordered regions lie at residues 662–706, 746–765, 794–911, and 948–998; these read SSLP…TESE, SLGSWINSSPDSSENLSEIP, GTEG…THLL, and KLPP…SRHN. Residues 989–998 are compositionally biased toward basic and acidic residues; that stretch reads HGKDGCSRHN.

Belongs to the TRAFAC class myosin-kinesin ATPase superfamily. Kinesin family.

Its subcellular location is the cytoplasm. The protein resides in the cytoskeleton. The protein localises to the cell projection. It localises to the cilium. Its function is as follows. Plus end-directed microtubule-dependent motor protein that regulates the length of motile cilia by mediating depolymerization of microtubules at ciliary tips. This Homo sapiens (Human) protein is Kinesin-like protein KIF19 (KIF19).